The following is a 151-amino-acid chain: Urease accessory protein UreE (151 aa).

Belongs to the UreE family.

It is found in the cytoplasm. Involved in urease metallocenter assembly. Binds nickel. Probably functions as a nickel donor during metallocenter assembly. This chain is Urease accessory protein UreE, found in Lachnoclostridium phytofermentans (strain ATCC 700394 / DSM 18823 / ISDg) (Clostridium phytofermentans).